The following is a 513-amino-acid chain: Xylose import ATP-binding protein XylG (513 aa).

ABC transporter domains follow at residues 5-242 (LEMK…VGRE) and 259-505 (LRVE…LRSE). An ATP-binding site is contributed by 37–44 (GENGSGKS).

It belongs to the ABC transporter superfamily. Xylose importer (TC 3.A.1.2.4) family. In terms of assembly, the complex is composed of two ATP-binding proteins (XylG), two transmembrane proteins (XylH) and a solute-binding protein (XylF).

It localises to the cell inner membrane. It carries out the reaction D-xylose(out) + ATP + H2O = D-xylose(in) + ADP + phosphate + H(+). Its function is as follows. Part of the ABC transporter complex XylFGH involved in xylose import. Responsible for energy coupling to the transport system. The polypeptide is Xylose import ATP-binding protein XylG (Pectobacterium atrosepticum (strain SCRI 1043 / ATCC BAA-672) (Erwinia carotovora subsp. atroseptica)).